Reading from the N-terminus, the 566-residue chain is MHPTGPHLGPDVLFRESNMKVTLTFNEQRRAAYRQQGLWGDASLADYWQQTARAMPDKIAVVDNHGASYTYSALDHAASCLANWMLAKGIESGDRIAFQLPGWCEFTVIYLACLKIGAVSVPLLPSWREAELVWVLNKCQAKMFFAPTLFKQTRPVDLILPLQNQLPQLQQIVGVDKLAPATSSLSLSQIIADNTSLTTAITTHGDELAAVLFTSGTEGLPKGVMLTHNNILASERAYCARLNLTWQDVFMMPAPLGHATGFLHGVTAPFLIGARSVLLDIFTPDACLALLEQQRCTCMLGATPFVYDLLNVLEKQPADLSALRFFLCGGTTIPKKVARECQQRGIKLLSVYGSTESSPHAVVNLDDPLSRFMHTDGYAAAGVEIKVVDDARKTLPPGCEGEEASRGPNVFMGYFDEPELTARALDEEGWYYSGDLCRMDEAGYIKITGRKKDIIVRGGENISSREVEDILLQHPKIHDACVVAMSDERLGERSCAYVVLKAPHHSLSLEEVVAFFSRKRVAKYKYPEHIVVIEKLPRTTSGKIQKFLLRKDIMRRLTQDVCEEIE.

An ATP-binding site is contributed by 231 to 242 (ILASERAYCARL).

The protein belongs to the ATP-dependent AMP-binding enzyme family. As to quaternary structure, homodimer. The cofactor is Mg(2+).

The protein resides in the cell membrane. It carries out the reaction hexanoate + ATP + CoA = hexanoyl-CoA + AMP + diphosphate. It catalyses the reaction octanoate + ATP + CoA = octanoyl-CoA + AMP + diphosphate. The enzyme catalyses dodecanoate + ATP + CoA = dodecanoyl-CoA + AMP + diphosphate. It participates in lipid metabolism; fatty acid beta-oxidation. In terms of biological role, catalyzes the esterification, concomitant with transport, of exogenous fatty acids into metabolically active CoA thioesters for subsequent degradation or incorporation into phospholipids. Is maximally active on C6:0, C8:0 and C12:0 fatty acids, while has a low activity on C14-C18 chain length fatty acids. Is involved in the anaerobic beta-oxidative degradation of fatty acids, which allows anaerobic growth of E.coli on fatty acids as a sole carbon and energy source in the presence of nitrate or fumarate as a terminal electron acceptor. Can functionally replace FadD under anaerobic conditions. The chain is Medium-chain fatty-acid--CoA ligase from Escherichia coli (strain K12).